The sequence spans 100 residues: Large ribosomal subunit protein bL28 (100 aa).

The tract at residues Met-1–Ser-21 is disordered. Polar residues predominate over residues Gln-10–Ser-19.

Belongs to the bacterial ribosomal protein bL28 family.

The polypeptide is Large ribosomal subunit protein bL28 (Ehrlichia canis (strain Jake)).